The primary structure comprises 1096 residues: DNA-directed RNA polymerase subunit beta (1096 aa).

The tract at residues 1069-1096 (DLMQDVNPRRSTPSRPTYESLGSDYQED) is disordered.

This sequence belongs to the RNA polymerase beta chain family. As to quaternary structure, in cyanobacteria the RNAP catalytic core is composed of 2 alpha, 1 beta, 1 beta', 1 gamma and 1 omega subunit. When a sigma factor is associated with the core the holoenzyme is formed, which can initiate transcription.

The enzyme catalyses RNA(n) + a ribonucleoside 5'-triphosphate = RNA(n+1) + diphosphate. Its function is as follows. DNA-dependent RNA polymerase catalyzes the transcription of DNA into RNA using the four ribonucleoside triphosphates as substrates. The chain is DNA-directed RNA polymerase subunit beta from Prochlorococcus marinus (strain SARG / CCMP1375 / SS120).